A 233-amino-acid polypeptide reads, in one-letter code: Orotidine 5'-phosphate decarboxylase (233 aa).

Residues Asp-11, Lys-33, 60–69 (DLKFHDIPNT), Thr-120, Arg-181, Gln-190, Gly-210, and Arg-211 each bind substrate. Residue Lys-62 is the Proton donor of the active site.

The protein belongs to the OMP decarboxylase family. Type 1 subfamily. In terms of assembly, homodimer.

The catalysed reaction is orotidine 5'-phosphate + H(+) = UMP + CO2. It participates in pyrimidine metabolism; UMP biosynthesis via de novo pathway; UMP from orotate: step 2/2. In terms of biological role, catalyzes the decarboxylation of orotidine 5'-monophosphate (OMP) to uridine 5'-monophosphate (UMP). The chain is Orotidine 5'-phosphate decarboxylase from Vibrio campbellii (strain ATCC BAA-1116).